The sequence spans 158 residues: 6,7-dimethyl-8-ribityllumazine synthase (158 aa).

Residues Phe-22, 56–58, and 80–82 each bind 5-amino-6-(D-ribitylamino)uracil; these read ALE and VVI. A (2S)-2-hydroxy-3-oxobutyl phosphate-binding site is contributed by 85-86; that stretch reads ET. Catalysis depends on His-88, which acts as the Proton donor. Position 113 (Asn-113) interacts with 5-amino-6-(D-ribitylamino)uracil. Arg-127 provides a ligand contact to (2S)-2-hydroxy-3-oxobutyl phosphate.

The protein belongs to the DMRL synthase family.

The enzyme catalyses (2S)-2-hydroxy-3-oxobutyl phosphate + 5-amino-6-(D-ribitylamino)uracil = 6,7-dimethyl-8-(1-D-ribityl)lumazine + phosphate + 2 H2O + H(+). It participates in cofactor biosynthesis; riboflavin biosynthesis; riboflavin from 2-hydroxy-3-oxobutyl phosphate and 5-amino-6-(D-ribitylamino)uracil: step 1/2. Functionally, catalyzes the formation of 6,7-dimethyl-8-ribityllumazine by condensation of 5-amino-6-(D-ribitylamino)uracil with 3,4-dihydroxy-2-butanone 4-phosphate. This is the penultimate step in the biosynthesis of riboflavin. The sequence is that of 6,7-dimethyl-8-ribityllumazine synthase from Neisseria meningitidis serogroup C (strain 053442).